The following is a 244-amino-acid chain: Ribonuclease PH (244 aa).

Phosphate contacts are provided by residues Arg86 and 124 to 126 (GTR).

Belongs to the RNase PH family. In terms of assembly, homohexameric ring arranged as a trimer of dimers.

It carries out the reaction tRNA(n+1) + phosphate = tRNA(n) + a ribonucleoside 5'-diphosphate. Functionally, phosphorolytic 3'-5' exoribonuclease that plays an important role in tRNA 3'-end maturation. Removes nucleotide residues following the 3'-CCA terminus of tRNAs; can also add nucleotides to the ends of RNA molecules by using nucleoside diphosphates as substrates, but this may not be physiologically important. Probably plays a role in initiation of 16S rRNA degradation (leading to ribosome degradation) during starvation. This chain is Ribonuclease PH, found in Glaesserella parasuis serovar 5 (strain SH0165) (Haemophilus parasuis).